We begin with the raw amino-acid sequence, 227 residues long: Transcriptional regulatory protein CusR (227 aa).

In terms of domain architecture, Response regulatory spans Lys-2–Leu-116. Residue Asp-51 is modified to 4-aspartylphosphate. A DNA-binding region (ompR/PhoB-type) is located at residues Glu-125–Val-223.

Post-translationally, phosphorylated by CusS.

The protein localises to the cytoplasm. Member of the two-component regulatory system CusS/CusR involved in response to copper and silver. This Escherichia coli O6:H1 (strain CFT073 / ATCC 700928 / UPEC) protein is Transcriptional regulatory protein CusR (cusR).